The sequence spans 150 residues: 3-dehydroquinate dehydratase (150 aa).

Tyr26 acts as the Proton acceptor in catalysis. 3 residues coordinate substrate: Asn77, His83, and Asp90. The active-site Proton donor is His103. Residues 104–105 (IS) and Arg114 each bind substrate.

Belongs to the type-II 3-dehydroquinase family. As to quaternary structure, homododecamer.

The catalysed reaction is 3-dehydroquinate = 3-dehydroshikimate + H2O. It participates in metabolic intermediate biosynthesis; chorismate biosynthesis; chorismate from D-erythrose 4-phosphate and phosphoenolpyruvate: step 3/7. Functionally, catalyzes a trans-dehydration via an enolate intermediate. This is 3-dehydroquinate dehydratase from Buchnera aphidicola subsp. Acyrthosiphon pisum (strain 5A).